Here is a 583-residue protein sequence, read N- to C-terminus: Aspartate--tRNA ligase (583 aa).

An L-aspartate-binding site is contributed by Glu-173. The interval Gln-197–Lys-200 is aspartate. Arg-219 is a binding site for L-aspartate. Residues Arg-219–Glu-221 and Gln-228 contribute to the ATP site. His-444 provides a ligand contact to L-aspartate. Glu-478 contacts ATP. Arg-485 provides a ligand contact to L-aspartate. Position 530–533 (Gly-530–Arg-533) interacts with ATP.

The protein belongs to the class-II aminoacyl-tRNA synthetase family. Type 1 subfamily. Homodimer.

Its subcellular location is the cytoplasm. It carries out the reaction tRNA(Asp) + L-aspartate + ATP = L-aspartyl-tRNA(Asp) + AMP + diphosphate. Catalyzes the attachment of L-aspartate to tRNA(Asp) in a two-step reaction: L-aspartate is first activated by ATP to form Asp-AMP and then transferred to the acceptor end of tRNA(Asp). This Azobacteroides pseudotrichonymphae genomovar. CFP2 protein is Aspartate--tRNA ligase.